Reading from the N-terminus, the 1613-residue chain is NAD-specific glutamate dehydrogenase (1613 aa).

Residue Lys-849 is part of the active site.

It belongs to the Glu/Leu/Phe/Val dehydrogenases family.

The catalysed reaction is L-glutamate + NAD(+) + H2O = 2-oxoglutarate + NH4(+) + NADH + H(+). In terms of biological role, involved in arginine catabolism by converting L-glutamate, into 2-oxoglutarate, which is then channeled into the tricarboxylic acid cycle. The protein is NAD-specific glutamate dehydrogenase of Halomonas elongata (strain ATCC 33173 / DSM 2581 / NBRC 15536 / NCIMB 2198 / 1H9).